A 764-amino-acid polypeptide reads, in one-letter code: Thyrotropin receptor (764 aa).

A signal peptide spans 1 to 21 (MSLTPLLQLALLLALPRSLRG). Topologically, residues 22–413 (KGCPSPPCEC…EFNPCEDIMG (392 aa)) are extracellular. Cys-31 and Cys-41 are oxidised to a cystine. 2 N-linked (GlcNAc...) asparagine glycosylation sites follow: Asn-77 and Asn-99. LRR repeat units follow at residues 125–150 (LPLL…VYST), 151–174 (DVFF…AFQG), 176–199 (CNET…AFNG), 201–223 (KLDA…AFGG), 225–248 (FSGP…GLEH), and 250–271 (KELI…SFLH). N-linked (GlcNAc...) asparagine glycans are attached at residues Asn-177 and Asn-198. Asn-302 is a glycosylation site (N-linked (GlcNAc...) asparagine). Sulfotyrosine is present on Tyr-385. The helical transmembrane segment at 414-441 (YRFLRIVVWFVSLLALLGNVFVLVILLT) threads the bilayer. Over 442–450 (SHYKLTVPR) the chain is Cytoplasmic. A helical membrane pass occupies residues 451–473 (FLMCNLAFADFCMGMYLLLIASV). Residues 474 to 494 (DLYTQSEYYNHAIDWQTGPGC) lie on the Extracellular side of the membrane. The cysteines at positions 494 and 569 are disulfide-linked. Residues 495 to 517 (NTAGFFTVFASELSVYTLTVITL) traverse the membrane as a helical segment. Residues 518 to 537 (ERWYAITFAMRLDRKIRLRH) are Cytoplasmic-facing. The chain crosses the membrane as a helical span at residues 538-560 (AYAIMAGGWVCCFLLALLPLVGI). Topologically, residues 561 to 580 (SSYAKVSICLPMDTETPLAL) are extracellular. Residues 581-602 (AYIILVLLLNIVAFTIVCSCYV) form a helical membrane-spanning segment. Residues 603-625 (KIYITVRNPQYNPGDKDTKIAKR) lie on the Cytoplasmic side of the membrane. The helical transmembrane segment at 626 to 649 (MAVLIFTDFMCMAPISFYALSALM) threads the bilayer. Residues 650–660 (NKPLITVTNSK) are Extracellular-facing. A helical membrane pass occupies residues 661-682 (ILLVLFYPLNSCANPFLYAIFT). The Cytoplasmic segment spans residues 683-764 (KAFQRDVFIL…ISKEYKQPVL (82 aa)). Positions 762–764 (PVL) match the PDZ-binding motif.

It belongs to the G-protein coupled receptor 1 family. FSH/LSH/TSH subfamily. As to quaternary structure, interacts with heterodimer GPHA2:GPHB5; this interaction stimulates cAMP production. Interacts (via the PDZ-binding motif) with SCRIB; regulates TSHR trafficking and function. Glycosylated. In terms of processing, sulfated. Sulfation on Tyr-385 plays a role in thyrotropin receptor binding and activation. Expressed in thyroide cells (at protein level).

The protein localises to the cell membrane. It localises to the basolateral cell membrane. Receptor for the thyroid-stimulating hormone (TSH) or thyrotropin. Also acts as a receptor for the heterodimeric glycoprotein hormone (GPHA2:GPHB5) or thyrostimulin. The activity of this receptor is mediated by G proteins which activate adenylate cyclase. Plays a central role in controlling thyroid cell metabolism. The sequence is that of Thyrotropin receptor (TSHR) from Sus scrofa (Pig).